Reading from the N-terminus, the 320-residue chain is MTSIPFPGDRLLQVDGVILCGLTHKQAVQCLKGPGQVARLVLERRVPRSTQQCPSANDSMGDERTAVSLVTALPGRPSSCVSVTDGPKFEVKLKKNANGLGFSFVQMEKESCSHLKSDLVRIKRLFPGQPAEENGAIAAGDIILAVNGRSTEGLIFQEVLHLLRGAPQEVTLLLCRPPPGALPEMEQEWQTPELSADKEFTRATCTDSCTSPILDQEDSWRDSASPDAGEGLGLRPESSQKAIREAQWGQNRERPWASSLTHSPESHPHLCKLHQERDESTLATSLEKDVRQNCYSVCDIMRLGRYSFSSPLTRLSTDIF.

2 PDZ domains span residues 1-46 (MTSI…ERRV) and 90-178 (EVKL…CRPP). The disordered stretch occupies residues 215–239 (DQEDSWRDSASPDAGEGLGLRPESS).

This Homo sapiens (Human) protein is Putative protein FRMPD2-like.